We begin with the raw amino-acid sequence, 417 residues long: Zinc finger CCCH domain-containing protein ZFN-like (417 aa).

2 consecutive C3H1-type zinc fingers follow at residues 31 to 58 (PGEP…HPPN) and 75 to 103 (RLGQ…HPKD). The segment at 121 to 149 (RPNESERAYYLRTGQCKFGNTCKFHHPQP) adopts a C3H1-type 3; degenerate zinc-finger fold. 2 consecutive C3H1-type zinc fingers follow at residues 278–306 (RPDQ…HPRE) and 324–352 (RPGE…HPMG). Positions 383–417 (SSEGLVESGTAKPRRLSLSETRPIPPGDDNIDDEG) are disordered.

It localises to the nucleus. This Pisum sativum (Garden pea) protein is Zinc finger CCCH domain-containing protein ZFN-like.